Here is a 140-residue protein sequence, read N- to C-terminus: Transmembrane protein 234 homolog (140 aa).

The next 4 helical transmembrane spans lie at 14 to 34 (IYAVLSILLVAIMWGATNPFI), 64 to 84 (WQYLLPLVINQLGSIVYVLTL), 88 to 108 (ELSLTVPMANSLTFVFTAITA), and 116 to 136 (SGWKIYCGMTLVILGTVICGL).

Belongs to the TMEM234 family.

The protein localises to the membrane. This is Transmembrane protein 234 homolog from Anopheles gambiae (African malaria mosquito).